Reading from the N-terminus, the 130-residue chain is Phosphoribosyl-AMP cyclohydrolase (130 aa).

Asp-77 is a Mg(2+) binding site. Cys-78 serves as a coordination point for Zn(2+). Mg(2+) is bound by residues Asp-79 and Asp-81. Zn(2+) is bound by residues Cys-95 and Cys-102.

Belongs to the PRA-CH family. In terms of assembly, homodimer. Mg(2+) is required as a cofactor. It depends on Zn(2+) as a cofactor.

Its subcellular location is the cytoplasm. It carries out the reaction 1-(5-phospho-beta-D-ribosyl)-5'-AMP + H2O = 1-(5-phospho-beta-D-ribosyl)-5-[(5-phospho-beta-D-ribosylamino)methylideneamino]imidazole-4-carboxamide. It participates in amino-acid biosynthesis; L-histidine biosynthesis; L-histidine from 5-phospho-alpha-D-ribose 1-diphosphate: step 3/9. Catalyzes the hydrolysis of the adenine ring of phosphoribosyl-AMP. The protein is Phosphoribosyl-AMP cyclohydrolase of Pseudomonas syringae pv. tomato (strain ATCC BAA-871 / DC3000).